We begin with the raw amino-acid sequence, 592 residues long: Condensin-2 complex subunit H2 (592 aa).

Disordered regions lie at residues 89–116 (NKKR…DGCE) and 261–285 (EAPS…PKQL). Residues 96 to 108 (GSSSDGNQEQAPS) are compositionally biased toward polar residues.

It belongs to the CND2 H2 (condensin-2 subunit 2) family. As to quaternary structure, component of the condensin-2 complex, which contains the smc2 and smc4 heterodimer, and three non SMC subunits, ncapg2, ncaph2 and ncapd3 that probably regulate the complex.

It is found in the nucleus. Regulatory subunit of the condensin-2 complex, a complex that seems to provide chromosomes with an additional level of organization and rigidity and in establishing mitotic chromosome architecture. This Danio rerio (Zebrafish) protein is Condensin-2 complex subunit H2 (ncaph2).